The following is a 258-amino-acid chain: Imidazole glycerol phosphate synthase subunit HisF (258 aa).

Active-site residues include D11 and D130.

It belongs to the HisA/HisF family. Heterodimer of HisH and HisF.

The protein resides in the cytoplasm. It carries out the reaction 5-[(5-phospho-1-deoxy-D-ribulos-1-ylimino)methylamino]-1-(5-phospho-beta-D-ribosyl)imidazole-4-carboxamide + L-glutamine = D-erythro-1-(imidazol-4-yl)glycerol 3-phosphate + 5-amino-1-(5-phospho-beta-D-ribosyl)imidazole-4-carboxamide + L-glutamate + H(+). It functions in the pathway amino-acid biosynthesis; L-histidine biosynthesis; L-histidine from 5-phospho-alpha-D-ribose 1-diphosphate: step 5/9. Its function is as follows. IGPS catalyzes the conversion of PRFAR and glutamine to IGP, AICAR and glutamate. The HisF subunit catalyzes the cyclization activity that produces IGP and AICAR from PRFAR using the ammonia provided by the HisH subunit. The sequence is that of Imidazole glycerol phosphate synthase subunit HisF from Xanthomonas axonopodis pv. citri (strain 306).